Reading from the N-terminus, the 97-residue chain is YcgL domain-containing protein PFL_1496 (97 aa).

A YcgL domain is found at 3–87; it reads RICSIYKSPR…AEDEYIEHLP (85 aa).

This is YcgL domain-containing protein PFL_1496 from Pseudomonas fluorescens (strain ATCC BAA-477 / NRRL B-23932 / Pf-5).